Here is a 640-residue protein sequence, read N- to C-terminus: MSFFAGKLNNKSILSLRRGSGGDTNQHINPDSQTIFHSDMSHVIITETHSTGLRLDQGAGDYYWSEMPSRVTQLHNNDPNRVVLTEIEFSDGSRHMLSGMSMGVGAKAYGIINPQIMSQGGLKTQITASADLSLDVGYFNTGTSGTIPQKLRDGTGCQHMFGAFSGRRGFASSAMYLGGAALYKSAWSGSGYVVADAGTLTIPSDYVRHPGARNFGFNAIYVRGRSCNRVLYGMEGPNYTTGGAVQGASSSGALNFTYNPSNPESPKYSVGFARADPTNYAYWESMGDPNDSANGPIGIYSEHLGIYPSKITWYVTNLVYNGSGYNIDGGLFNGNDIKLSPREFIIKGVNVNNTSWKFINFIEKNFNVGNRADFRDVGCNLSKDSPSTGISGIATFGLPTTESNNAPSIKGGNVGGLHANVVSIYNFLPSASWYVSSNPPKIGNNYGDVWSENLLPLRLLGGSGSTILSGNIVFQGNGSVHVGTVGLDLNSSRNGAIVCTMEFIDDTWLSAGGIGCFNPTEMLSQGAEYGDSRFRIGGNTINKKLHQILSLPAGEYVPFFTIKGTVVNACKLQAAAYNPTPYWVSGLPGSVGQTGYYTLTYYMRNDGNNNISIWLDSSMSNIIGMKACLPNIKLIIQRLT.

The interval 571 to 580 (KLQAAAYNPT) is interaction with host FhuA.

In terms of assembly, monomer. Interacts with straight fiber protein pb4. Interacts with the host FhuA receptor; this interaction is necessary for the entry of the viral genome into the host cell.

Its subcellular location is the virion. Structural component of the distal part of the tail. Mediates T5 irreversible binding to its host entry receptor, the E.coli outer membrane ferrichrome transporter FhuA protein. Upon binding to host FhuA, pb5 undergoes conformational changes that are probably the key to the transmission of the signal through the tail to the capsid, triggering DNA release. This chain is Receptor-binding protein pb5 (oad), found in Escherichia coli (Enterobacteria phage T5).